Here is a 516-residue protein sequence, read N- to C-terminus: Nucleolar complex protein 4 homolog (516 aa).

3 consecutive transmembrane segments (helical) span residues serine 296–isoleucine 316, phenylalanine 347–alanine 367, and leucine 375–leucine 395.

It belongs to the CBF/MAK21 family.

It localises to the nucleus membrane. The protein localises to the nucleus. It is found in the nucleolus. This is Nucleolar complex protein 4 homolog (Noc4l) from Mus musculus (Mouse).